We begin with the raw amino-acid sequence, 184 residues long: Late embryogenesis abundant protein (184 aa).

A disordered region spans residues 49–184 (TGNIAEYPTE…KLPGHHNHHP (136 aa)). The span at 60 to 86 (PPAGVAAGTGAAATTAAGVTTSETTTG) shows a compositional bias: low complexity. 2 stretches are compositionally biased toward basic and acidic residues: residues 87-98 (QEHHGSLGEHLR) and 122-138 (KDKIKDKLGGGKHKDEQ). Residues 139-159 (TPTTATTTGPTTTTTTTGAAA) are compositionally biased toward low complexity. Residues 160–177 (DQHHEKKGILEKIKEKLP) are compositionally biased toward basic and acidic residues.

It belongs to the plant dehydrin family.

Its function is as follows. LEA protein are late embryogenesis abundant in higher plant seed embryos. There are two subsets of LEA proteins (5a, and 5b), the first ones are expressed when the cotyledon weight reach 80 mg and the second set are expressed above 100 mg. The function of those proteins is not known. In Raphanus sativus (Radish), this protein is Late embryogenesis abundant protein.